A 278-amino-acid chain; its full sequence is uncharacterized protein (278 aa).

Basic and acidic residues predominate over residues 1–11; the sequence is MMIHIHQDKKM. 2 disordered regions span residues 1-107 and 206-278; these read MMIH…RYFK and KVSA…KASR. The segment covering 62 to 94 has biased composition (low complexity); sequence KQSGGKNAKSGSKSAKSGSKSAKSGSKTSKTQS. The span at 97–107 shows a compositional bias: basic and acidic residues; that stretch reads KGDESRDRYFK. The segment covering 249-260 has biased composition (polar residues); sequence SAKNAKSTGNKK. The span at 264–278 shows a compositional bias: low complexity; it reads KSAGAKKAPAAKASR.

This is an uncharacterized protein from Acanthamoeba polyphaga mimivirus (APMV).